A 418-amino-acid chain; its full sequence is Tryptophan synthase beta chain 1 (418 aa).

Lysine 99 is modified (N6-(pyridoxal phosphate)lysine).

The protein belongs to the TrpB family. As to quaternary structure, tetramer of two alpha and two beta chains. Pyridoxal 5'-phosphate is required as a cofactor.

The enzyme catalyses (1S,2R)-1-C-(indol-3-yl)glycerol 3-phosphate + L-serine = D-glyceraldehyde 3-phosphate + L-tryptophan + H2O. Its pathway is amino-acid biosynthesis; L-tryptophan biosynthesis; L-tryptophan from chorismate: step 5/5. In terms of biological role, the beta subunit is responsible for the synthesis of L-tryptophan from indole and L-serine. The sequence is that of Tryptophan synthase beta chain 1 (trpB1) from Corynebacterium efficiens (strain DSM 44549 / YS-314 / AJ 12310 / JCM 11189 / NBRC 100395).